Consider the following 100-residue polypeptide: UPF0213 protein FN1575 (100 aa).

One can recognise a GIY-YIG domain in the interval methionine 1–isoleucine 77.

Belongs to the UPF0213 family.

The chain is UPF0213 protein FN1575 from Fusobacterium nucleatum subsp. nucleatum (strain ATCC 25586 / DSM 15643 / BCRC 10681 / CIP 101130 / JCM 8532 / KCTC 2640 / LMG 13131 / VPI 4355).